A 501-amino-acid polypeptide reads, in one-letter code: Lysine--tRNA ligase (501 aa).

Residues E404 and E411 each coordinate Mg(2+).

This sequence belongs to the class-II aminoacyl-tRNA synthetase family. As to quaternary structure, homodimer. Mg(2+) serves as cofactor.

It localises to the cytoplasm. It carries out the reaction tRNA(Lys) + L-lysine + ATP = L-lysyl-tRNA(Lys) + AMP + diphosphate. The sequence is that of Lysine--tRNA ligase (lysS) from Campylobacter jejuni subsp. jejuni serotype O:2 (strain ATCC 700819 / NCTC 11168).